Reading from the N-terminus, the 510-residue chain is Arginine biosynthesis bifunctional protein ArgJ, chloroplastic (510 aa).

Substrate is bound by residues Thr223, Lys249, Glu359, Asn505, and Thr510.

This sequence belongs to the ArgJ family. In terms of assembly, heterodimer of an alpha and a beta chain.

The protein resides in the plastid. Its subcellular location is the chloroplast. It carries out the reaction N(2)-acetyl-L-ornithine + L-glutamate = N-acetyl-L-glutamate + L-ornithine. The catalysed reaction is L-glutamate + acetyl-CoA = N-acetyl-L-glutamate + CoA + H(+). The protein operates within amino-acid biosynthesis; L-arginine biosynthesis; L-ornithine and N-acetyl-L-glutamate from L-glutamate and N(2)-acetyl-L-ornithine (cyclic): step 1/1. It functions in the pathway amino-acid biosynthesis; L-arginine biosynthesis; N(2)-acetyl-L-ornithine from L-glutamate: step 1/4. Its function is as follows. Catalyzes two activities which are involved in the cyclic version of arginine biosynthesis: the synthesis of acetylglutamate from glutamate and acetyl-CoA, and of ornithine by transacetylation between acetylornithine and glutamate. In Vitis vinifera (Grape), this protein is Arginine biosynthesis bifunctional protein ArgJ, chloroplastic.